A 187-amino-acid polypeptide reads, in one-letter code: Decorin-binding protein B (187 aa).

An N-terminal signal peptide occupies residues 1–20 (MKIGKLNSIVMVLFFDLLVA).

Belongs to the decorin-binding protein family.

Binds to decorin which may mediate the adherence of B.burgdorferi to collagen fibers in skin and other tissues. This Borreliella burgdorferi (strain N40) (Borrelia burgdorferi) protein is Decorin-binding protein B (dbpB).